Reading from the N-terminus, the 292-residue chain is Phosphotriesterase homology protein (292 aa).

Residues His12, His14, and Glu125 each contribute to the Zn(2+) site. Position 148–149 (148–149 (HN)) interacts with beta-D-glucose. His158 lines the Zn(2+) pocket. Residues Gly176, Asp178, and Arg181 each contribute to the beta-D-glucose site. Positions 186 and 243 each coordinate Zn(2+). 2 residues coordinate beta-D-glucose: Asp280 and Arg284.

The protein belongs to the metallo-dependent hydrolases superfamily. Phosphotriesterase family. Monomer. Requires Zn(2+) as cofactor.

Activity is higher in the enzyme containing Mn(2+) than that containing Zn(2+). Functionally, catalyzes the hydrolysis of phosphorylated glyceryl acetates in which the presence of a phosphate group is required for the enzymatic hydrolysis. Hydrolyzes a dibutyl glycerol derivative suggesting it acts on phosphoglycerol substrates with a butyrate leaving group. Also active with aromatic acetates and propionates. No activity with various sugar phosphates, with various nitrophenylphosphate or nitrophenylphosphonate derivatives, or with phosphorylated or non-phosphorylated sugar lactones tested. Does not hydrolyze non-phosphorylated carboxyesters with long chain leaving groups. No general esterase, aminopeptidase, sulfatase, phosphatase, carbonic anhydrase, phosphodiesterase, and phosphotriesterase activities detected when tested with the following non-specific substrates: p-nitrophenyl acetate, L-alanine nitroanilide, p-nitrophenyl sulfate, bis(p-nitrophenyl) phosphate, paraoxon, and p-nitrophenyl phosphate. The protein is Phosphotriesterase homology protein of Escherichia coli (strain K12).